Reading from the N-terminus, the 382-residue chain is Small ribosomal subunit protein bS1 homolog (382 aa).

S1 motif domains lie at 18–85 (GDVV…LSKR), 103–168 (GHVF…LSHK), 189–257 (GDVV…LSIK), and 274–343 (GDIR…LSIK). At serine 244 the chain carries Phosphoserine.

Belongs to the bacterial ribosomal protein bS1 family.

In Bacillus cereus (strain ATCC 10987 / NRS 248), this protein is Small ribosomal subunit protein bS1 homolog.